The following is a 198-amino-acid chain: Alkyl hydroperoxide reductase C (198 aa).

The Thioredoxin domain maps to 2–163 (TLVTQKAPNF…MIRMIDALNF (162 aa)). The Cysteine sulfenic acid (-SOH) intermediate role is filled by cysteine 50.

Belongs to the peroxiredoxin family. AhpC/Prx1 subfamily. As to quaternary structure, homodimer; disulfide-linked, upon oxidation. 5 homodimers assemble to form a ring-like decamer.

The protein localises to the cytoplasm. It catalyses the reaction a hydroperoxide + NADH + H(+) = an alcohol + NAD(+) + H2O. Its function is as follows. Thiol-specific peroxidase that catalyzes the reduction of hydrogen peroxide and organic hydroperoxides to water and alcohols, respectively. Plays a role in cell protection against oxidative stress by detoxifying peroxides. The chain is Alkyl hydroperoxide reductase C from Buchnera aphidicola subsp. Schizaphis graminum (strain Sg).